The sequence spans 340 residues: Short-chain dehydrogenase/reductase prx1 (340 aa).

Residues Ile60, Lys84, Asp104, Asn131, and Lys162 each contribute to the NADP(+) site. Ser184 functions as the Proton donor in the catalytic mechanism. NADP(+)-binding residues include Tyr210 and Lys214. Tyr210 (proton acceptor) is an active-site residue. Lys214 functions as the Lowers pKa of active site Tyr in the catalytic mechanism.

The protein belongs to the short-chain dehydrogenases/reductases (SDR) family.

The protein operates within sesquiterpene biosynthesis. In terms of biological role, short-chain dehydrogenase/reductase; part of the gene cluster that mediates the biosynthesis of PR-toxin, a bicyclic sesquiterpene belonging to the eremophilane class and acting as a mycotoxin. The first step of the pathway is catalyzed by the aristolochene synthase which performs the cyclization of trans,trans-farnesyl diphosphate (FPP) to the bicyclic sesquiterpene aristolochene. Following the formation of aristolochene, the non-oxygenated aristolochene is converted to the trioxygenated intermediate eremofortin B, via 7-epi-neopetasone. This conversion appears to involve three enzymes, a hydroxysterol oxidase-like enzyme, the quinone-oxidase prx3 that forms the quinone-type-structure in the bicyclic nucleus of aristolochene with the C8-oxo group and the C-3 hydroxyl group, and the P450 monooxygenase ORF6 that introduces the epoxide at the double bond between carbons 1 and 2. No monoxy or dioxy-intermediates have been reported to be released to the broth, so these three early oxidative reactions may be coupled together. Eremofortin B is further oxidized by another P450 monooxygenase, that introduces a second epoxide between carbons 7 and 11 prior to acetylation to eremofortin A by the acetyltransferase ORF8. The second epoxidation may be performed by a second P450 monooxygenase. After the acetylation step, eremofortin A is converted to eremofortin C and then to PR-toxin. First the conversion of eremofortin A to eremofortin C proceeds by oxidation of the side chain of the molecule at C-12 and is catalyzed by the short-chain oxidoreductase prx1. The cytochrome P450 monooxygenase ORF6 is probably also involved in this step. The primary alcohol formed at C-12 is finally oxidized by the short-chain alcohol dehydrogenase prx4 that forms PR-toxin. The polypeptide is Short-chain dehydrogenase/reductase prx1 (Penicillium roqueforti (strain FM164)).